The sequence spans 743 residues: Isocitrate dehydrogenase [NADP] 2 (743 aa).

Residues Asn-87 and Ser-89 each coordinate NADP(+). The D-threo-isocitrate site is built by Ser-134, Asn-137, Arg-141, Arg-147, and Lys-257. An NADP(+)-binding site is contributed by Asn-137. Asp-352 contributes to the Mg(2+) binding site. D-threo-isocitrate-binding residues include Tyr-422 and Arg-549. Mg(2+)-binding residues include Asp-550 and Asp-554. 5 residues coordinate NADP(+): Ser-587, His-591, Arg-602, Asp-604, and Arg-651.

Belongs to the monomeric-type IDH family. Monomer. The cofactor is Mg(2+). Mn(2+) serves as cofactor.

The catalysed reaction is D-threo-isocitrate + NADP(+) = 2-oxoglutarate + CO2 + NADPH. In terms of biological role, catalyzes the oxidative decarboxylation of isocitrate to 2-oxoglutarate and carbon dioxide with the concomitant reduction of NADP(+). This chain is Isocitrate dehydrogenase [NADP] 2 (icd2), found in Colwellia maris.